The sequence spans 71 residues: Long neurotoxin 1 (71 aa).

Disulfide bonds link C3-C20, C14-C41, C26-C30, C45-C56, and C57-C62.

The protein belongs to the three-finger toxin family. Long-chain subfamily. Type II alpha-neurotoxin sub-subfamily. Expressed by the venom gland.

It is found in the secreted. Its function is as follows. Binds with high affinity to muscular (alpha-1/CHRNA1) and neuronal (alpha-7/CHRNA7) nicotinic acetylcholine receptor (nAChR) and inhibits acetylcholine from binding to the receptor, thereby impairing neuromuscular and neuronal transmission. The chain is Long neurotoxin 1 from Naja haje haje (Egyptian cobra).